Here is a 390-residue protein sequence, read N- to C-terminus: UPF0229 protein ABC1477 (390 aa).

Disordered stretches follow at residues 1-31 (MEKDNGRQFTISQENWSLHRKGFQDQRRHQE) and 81-118 (VGQGKGDSKIGDIVARDPNGDKQAGAGKGSGAGDQAGE). Residues 7–16 (RQFTISQENW) show a composition bias toward polar residues. 2 stretches are compositionally biased toward basic and acidic residues: residues 22-31 (GFQDQRRHQE) and 86-100 (GDSKIGDIVARDPNG).

Belongs to the UPF0229 family.

The sequence is that of UPF0229 protein ABC1477 from Shouchella clausii (strain KSM-K16) (Alkalihalobacillus clausii).